The following is a 653-amino-acid chain: Exocyst complex component 7 (653 aa).

The interval 1 to 384 (MIPPQEASAR…TKNKLPGLIT (384 aa)) is SEC8 and ARHQ binding. Coiled coils occupy residues 5 to 42 (QEAS…TKNM) and 63 to 85 (VHKQ…SCLD). A Phosphoserine modification is found at S133. Residues 238-272 (FRKSSSSSGVPYSPAIPNKRKDTPTKKPIKRPGRD) are disordered.

The protein belongs to the EXO70 family. As to quaternary structure, the exocyst complex is composed of EXOC1, EXOC2, EXOC3, EXOC4, EXOC5, EXOC6, EXOC7 and EXOC8. Interacts with ARHQ in a GTP-dependent manner. Interacts with RAB11FIP3.

Its subcellular location is the cytoplasm. It localises to the cytosol. The protein localises to the cell membrane. It is found in the midbody. The protein resides in the midbody ring. Functionally, component of the exocyst complex involved in the docking of exocytic vesicles with fusion sites on the plasma membrane. In adipocytes, plays a crucial role in targeting SLC2A4 vesicle to the plasma membrane in response to insulin, perhaps directing the vesicle to the precise site of fusion. It is required for neuron survival and plays an essential role in cortical development. The chain is Exocyst complex component 7 (Exoc7) from Rattus norvegicus (Rat).